We begin with the raw amino-acid sequence, 275 residues long: Undecaprenyl-diphosphatase (275 aa).

Transmembrane regions (helical) follow at residues 2–22, 43–63, 83–103, 111–131, 161–181, 186–206, 225–245, and 255–275; these read LDIF…FLPI, FINM…IVIY, WQIW…GLPL, MTSW…FIVL, VLSM…AMLI, YVAT…ASLL, ILLV…KFLL, and PFGW…LVFA.

This sequence belongs to the UppP family.

It is found in the cell membrane. It carries out the reaction di-trans,octa-cis-undecaprenyl diphosphate + H2O = di-trans,octa-cis-undecaprenyl phosphate + phosphate + H(+). In terms of biological role, catalyzes the dephosphorylation of undecaprenyl diphosphate (UPP). Confers resistance to bacitracin. This is Undecaprenyl-diphosphatase from Lactobacillus delbrueckii subsp. bulgaricus (strain ATCC 11842 / DSM 20081 / BCRC 10696 / JCM 1002 / NBRC 13953 / NCIMB 11778 / NCTC 12712 / WDCM 00102 / Lb 14).